The sequence spans 1002 residues: ATP-dependent DNA helicase MPH1 (1002 aa).

The 168-residue stretch at 108-275 (IVRCALFENV…EVVNNLHISK (168 aa)) folds into the Helicase ATP-binding domain. 121-128 (IPTGTGKT) contacts ATP. Positions 223-226 (DEAH) match the DEAH box motif. One can recognise a Helicase C-terminal domain in the interval 506 to 669 (DEETYIRKNK…ALEYTKSDRI (164 aa)). Over residues 531 to 551 (ENRVEEEKKRQKEQAKLERTG) the composition is skewed to basic and acidic residues. Disordered regions lie at residues 531–569 (ENRV…NQKQ) and 799–843 (AKSQ…DSHT). Over residues 553–568 (RTGSSEEAQLSGMNQK) the composition is skewed to polar residues.

It belongs to the DEAD box helicase family. DEAH subfamily. FANCM sub-subfamily. In terms of assembly, interacts with the MHF histone-fold complex to form the FANCM-MHF complex.

The protein resides in the nucleus. It catalyses the reaction ATP + H2O = ADP + phosphate + H(+). ATP-dependent DNA helicase involved in DNA damage repair by homologous recombination and in genome maintenance. Capable of unwinding D-loops. Plays a role in limiting crossover recombinants during mitotic DNA double-strand break (DSB) repair. Component of a FANCM-MHF complex which promotes gene conversion at blocked replication forks, probably by reversal of the stalled fork. The protein is ATP-dependent DNA helicase MPH1 of Kluyveromyces lactis (strain ATCC 8585 / CBS 2359 / DSM 70799 / NBRC 1267 / NRRL Y-1140 / WM37) (Yeast).